Here is a 219-residue protein sequence, read N- to C-terminus: Inner membrane protein YghB (219 aa).

At 1 to 17 the chain is on the cytoplasmic side; sequence MAVIQDIIAALWQHDFA. A helical transmembrane segment spans residues 18–38; sequence ALANPHVVSVVYFVMFATLFL. At 39–67 the chain is on the periplasmic side; it reads ENGLLPASFLPGDSLLLLAGALIAQDVMH. The helical transmembrane segment at 68–88 threads the bilayer; that stretch reads FLPTIGILTAAASLGCWLSYI. At 89–160 the chain is on the cytoplasmic side; the sequence is QGRWLGNTRT…RRFQFFNWLS (72 aa). A helical membrane pass occupies residues 161–181; sequence GLLWVTVVTSFGYALSMIPFV. Residues 182-191 are Periplasmic-facing; the sequence is KRHEDQVMTF. Residues 192–212 traverse the membrane as a helical segment; the sequence is LMILPVALLVAGLLGTLVVVI. Residues 213–219 lie on the Cytoplasmic side of the membrane; the sequence is KKKYCNA.

The protein belongs to the DedA family.

Its subcellular location is the cell inner membrane. The polypeptide is Inner membrane protein YghB (yghB) (Salmonella typhimurium (strain LT2 / SGSC1412 / ATCC 700720)).